A 501-amino-acid polypeptide reads, in one-letter code: Growth/differentiation factor 5 (501 aa).

The first 27 residues, 1–27 (MRLPKLLTFLLWYLAWLDLEFICTVLG), serve as a signal peptide directing secretion. Residues 28–381 (APDLGQRPQG…YLFSQRRKRR (354 aa)) constitute a propeptide that is removed on maturation. The tract at residues 29-169 (PDLGQRPQGT…EPFRPPPITP (141 aa)) is disordered. Over residues 99–111 (PRPGGPEPKPGHP) the composition is skewed to pro residues. Over residues 148–162 (KAREPGPPREPKEPF) the composition is skewed to basic and acidic residues. Asn189 carries N-linked (GlcNAc...) asparagine glycosylation. The tract at residues 246 to 265 (PSDTAKPAAPGGGRAAQLKL) is disordered. 3 cysteine pairs are disulfide-bonded: Cys400–Cys466, Cys429–Cys498, and Cys433–Cys500.

Belongs to the TGF-beta family. Homodimer; disulfide-linked. Interacts with serine proteases, HTRA1 and HTRA3. Following LPS binding, may form a complex with CXCR4, HSP90AA1 and HSPA8. Interacts with high affinity with NOG; inhibits chondrogenesis. Interacts with high affinity with BMPR1B and lower affinity with BMPR1A; positively regulates chondrocyte differentiation and induces SMAD dependent signaling. Interacts with FBN1 (via N-terminal domain) and FBN2. Interacts with TGFBR3. Predominantly expressed in long bones during embryonic development. Expressed in monocytes (at protein level).

It is found in the secreted. It localises to the cell membrane. Functionally, growth factor involved in bone and cartilage formation. During cartilage development regulates differentiation of chondrogenic tissue through two pathways. Firstly, positively regulates differentiation of chondrogenic tissue through its binding of high affinity with BMPR1B and of less affinity with BMPR1A, leading to induction of SMAD1-SMAD5-SMAD8 complex phosphorylation and then SMAD protein signaling transduction. Secondly, negatively regulates chondrogenic differentiation through its interaction with NOG. Required to prevent excessive muscle loss upon denervation. This function requires SMAD4 and is mediated by phosphorylated SMAD1/5/8. Binds bacterial lipopolysaccharide (LPS) and mediates LPS-induced inflammatory response, including TNF secretion by monocytes. The sequence is that of Growth/differentiation factor 5 (GDF5) from Homo sapiens (Human).